Here is a 179-residue protein sequence, read N- to C-terminus: Ribosome maturation factor RimM (179 aa).

Residues 98–170 enclose the PRC barrel domain; the sequence is PDEFWDRRLR…RIVVSGIPGL (73 aa).

The protein belongs to the RimM family. In terms of assembly, binds ribosomal protein uS19.

The protein resides in the cytoplasm. An accessory protein needed during the final step in the assembly of 30S ribosomal subunit, possibly for assembly of the head region. Essential for efficient processing of 16S rRNA. May be needed both before and after RbfA during the maturation of 16S rRNA. It has affinity for free ribosomal 30S subunits but not for 70S ribosomes. In Cutibacterium acnes (strain DSM 16379 / KPA171202) (Propionibacterium acnes), this protein is Ribosome maturation factor RimM.